Consider the following 248-residue polypeptide: tRNA (guanine-N(1)-)-methyltransferase (248 aa).

S-adenosyl-L-methionine is bound by residues G113 and 133–138 (VGDYVL).

Belongs to the RNA methyltransferase TrmD family. Homodimer.

The protein resides in the cytoplasm. The catalysed reaction is guanosine(37) in tRNA + S-adenosyl-L-methionine = N(1)-methylguanosine(37) in tRNA + S-adenosyl-L-homocysteine + H(+). Functionally, specifically methylates guanosine-37 in various tRNAs. The protein is tRNA (guanine-N(1)-)-methyltransferase of Shewanella oneidensis (strain ATCC 700550 / JCM 31522 / CIP 106686 / LMG 19005 / NCIMB 14063 / MR-1).